Consider the following 1024-residue polypeptide: Error-prone DNA polymerase (1024 aa).

This sequence belongs to the DNA polymerase type-C family. DnaE2 subfamily.

The protein resides in the cytoplasm. The catalysed reaction is DNA(n) + a 2'-deoxyribonucleoside 5'-triphosphate = DNA(n+1) + diphosphate. Functionally, DNA polymerase involved in damage-induced mutagenesis and translesion synthesis (TLS). It is not the major replicative DNA polymerase. This chain is Error-prone DNA polymerase, found in Vibrio parahaemolyticus serotype O3:K6 (strain RIMD 2210633).